Here is a 254-residue protein sequence, read N- to C-terminus: Ubiquinone biosynthesis O-methyltransferase (254 aa).

Arginine 47, glycine 76, aspartate 97, and leucine 141 together coordinate S-adenosyl-L-methionine.

It belongs to the methyltransferase superfamily. UbiG/COQ3 family.

It carries out the reaction a 3-demethylubiquinol + S-adenosyl-L-methionine = a ubiquinol + S-adenosyl-L-homocysteine + H(+). It catalyses the reaction a 3-(all-trans-polyprenyl)benzene-1,2-diol + S-adenosyl-L-methionine = a 2-methoxy-6-(all-trans-polyprenyl)phenol + S-adenosyl-L-homocysteine + H(+). It participates in cofactor biosynthesis; ubiquinone biosynthesis. Functionally, O-methyltransferase that catalyzes the 2 O-methylation steps in the ubiquinone biosynthetic pathway. The chain is Ubiquinone biosynthesis O-methyltransferase from Maricaulis maris (strain MCS10) (Caulobacter maris).